A 320-amino-acid chain; its full sequence is Beta-ketoacyl-[acyl-carrier-protein] synthase III (320 aa).

Residues Cys-114 and His-247 contribute to the active site. The segment at 248–252 is ACP-binding; sequence QANRR. Residue Asn-277 is part of the active site.

It belongs to the thiolase-like superfamily. FabH family. As to quaternary structure, homodimer.

Its subcellular location is the cytoplasm. The catalysed reaction is malonyl-[ACP] + acetyl-CoA + H(+) = 3-oxobutanoyl-[ACP] + CO2 + CoA. The protein operates within lipid metabolism; fatty acid biosynthesis. Catalyzes the condensation reaction of fatty acid synthesis by the addition to an acyl acceptor of two carbons from malonyl-ACP. Catalyzes the first condensation reaction which initiates fatty acid synthesis and may therefore play a role in governing the total rate of fatty acid production. Possesses both acetoacetyl-ACP synthase and acetyl transacylase activities. Its substrate specificity determines the biosynthesis of branched-chain and/or straight-chain of fatty acids. This chain is Beta-ketoacyl-[acyl-carrier-protein] synthase III, found in Neisseria meningitidis serogroup B (strain ATCC BAA-335 / MC58).